Consider the following 479-residue polypeptide: Kynurenine 3-monooxygenase (479 aa).

Residues Val-19, 37–40 (YEAR), and Ala-57 each bind FAD. Residues Arg-85 and Tyr-99 each contribute to the L-kynurenine site. FAD contacts are provided by residues Arg-111, Leu-136, Thr-172, Asp-304, and 317-318 (MN). 2 residues coordinate L-kynurenine: Asn-363 and Tyr-398. 2 consecutive transmembrane segments (helical) span residues 385–404 (FLHA…VAFT) and 425–445 (GLFV…VHHL).

Belongs to the aromatic-ring hydroxylase family. KMO subfamily. It depends on FAD as a cofactor. As to expression, expressed by organs containing secondary lymphoid tissue, such as the lung, spleen, mesenteric lymph node, thymus and peripheral lymph nodes.

The protein localises to the mitochondrion outer membrane. It carries out the reaction L-kynurenine + NADPH + O2 + H(+) = 3-hydroxy-L-kynurenine + NADP(+) + H2O. It participates in cofactor biosynthesis; NAD(+) biosynthesis; quinolinate from L-kynurenine: step 1/3. Functionally, catalyzes the hydroxylation of L-kynurenine (L-Kyn) to form 3-hydroxy-L-kynurenine (L-3OHKyn). Required for synthesis of quinolinic acid, a neurotoxic NMDA receptor antagonist and potential endogenous inhibitor of NMDA receptor signaling in axonal targeting, synaptogenesis and apoptosis during brain development. Quinolinic acid may also affect NMDA receptor signaling in pancreatic beta cells, osteoblasts, myocardial cells, and the gastrointestinal tract. In Mus musculus (Mouse), this protein is Kynurenine 3-monooxygenase.